The chain runs to 421 residues: Testin (421 aa).

Positions 92-199 (MILTNPVAAK…GDVKLPREMD (108 aa)) constitute a PET domain. Residues 133-164 (EKQPVAGSEGAQYRKKQLAKQLPAHDQDPSKC) form a disordered region. Basic and acidic residues predominate over residues 155 to 164 (PAHDQDPSKC). LIM zinc-binding domains follow at residues 234 to 297 (YSCY…CDSE), 299 to 359 (PRCA…NHAV), and 362 to 421 (QGCH…KMMS).

The protein belongs to the prickle / espinas / testin family. Interacts via LIM domain 1 with ZYX. Interacts (via LIM domain 3) with ENAH and VASP. Interacts with ALKBH4, talin, actin, alpha-actinin, GRIP1 and PXN. Interacts (via LIM domain 2) with ACTL7A (via N-terminus). Heterodimer with ACTL7A; the heterodimer interacts with ENAH to form a heterotrimer.

It is found in the cytoplasm. The protein resides in the cell junction. Its subcellular location is the focal adhesion. In terms of biological role, scaffold protein that may play a role in cell adhesion, cell spreading and in the reorganization of the actin cytoskeleton. Plays a role in the regulation of cell proliferation. May act as a tumor suppressor. The sequence is that of Testin (TES) from Canis lupus familiaris (Dog).